Consider the following 421-residue polypeptide: Probable sugar-binding periplasmic protein (421 aa).

An N-terminal signal peptide occupies residues 1 to 27 (MHKLLKLAAMGTAACALLAGMAPVANA).

This sequence belongs to the bacterial solute-binding protein 1 family.

It is found in the periplasm. Functionally, part of a binding-protein-dependent transport system for a sugar. The sequence is that of Probable sugar-binding periplasmic protein from Brucella melitensis biotype 1 (strain ATCC 23456 / CCUG 17765 / NCTC 10094 / 16M).